The chain runs to 218 residues: Octanoyltransferase (218 aa).

Residues 32-211 enclose the BPL/LPL catalytic domain; that stretch reads INTYDEIWFL…KLSQLLNVSI (180 aa). Substrate-binding positions include 75–82, 142–144, and 155–157; these read RGGQITYH, SLG, and GLS. Catalysis depends on Cys173, which acts as the Acyl-thioester intermediate.

It belongs to the LipB family.

The protein localises to the cytoplasm. It catalyses the reaction octanoyl-[ACP] + L-lysyl-[protein] = N(6)-octanoyl-L-lysyl-[protein] + holo-[ACP] + H(+). It functions in the pathway protein modification; protein lipoylation via endogenous pathway; protein N(6)-(lipoyl)lysine from octanoyl-[acyl-carrier-protein]: step 1/2. Its function is as follows. Catalyzes the transfer of endogenously produced octanoic acid from octanoyl-acyl-carrier-protein onto the lipoyl domains of lipoate-dependent enzymes. Lipoyl-ACP can also act as a substrate although octanoyl-ACP is likely to be the physiological substrate. The protein is Octanoyltransferase of Buchnera aphidicola subsp. Schizaphis graminum (strain Sg).